Consider the following 211-residue polypeptide: Small ribosomal subunit protein eS1 (211 aa).

A disordered region spans residues 192 to 211 (NGLPPYEAVGDRATPELASY).

This sequence belongs to the eukaryotic ribosomal protein eS1 family.

In Methanopyrus kandleri (strain AV19 / DSM 6324 / JCM 9639 / NBRC 100938), this protein is Small ribosomal subunit protein eS1.